The primary structure comprises 736 residues: Protein DSF2 (736 aa).

Residues 1–10 (MNQNLKNTSW) show a composition bias toward polar residues. Disordered stretches follow at residues 1 to 46 (MNQN…DSQF), 178 to 208 (SGMKPQMNRNEKDYKYPNLENGNRSTNSPNP), 229 to 410 (ISDN…SGEN), and 440 to 461 (FKTASTPQSSTDKKKNSKARPN). Basic and acidic residues predominate over residues 14–24 (IGSDDQERKAN). Composition is skewed to polar residues over residues 25 to 46 (SSEVSQSPPPNNSFESSMDSQF) and 197 to 208 (ENGNRSTNSPNP). The span at 238-256 (NNANSKNNRTTSNNINTST) shows a compositional bias: low complexity. Residues 264–284 (KQSCPNEFTTTQKSNCLYRNG) show a composition bias toward polar residues. 3 stretches are compositionally biased toward low complexity: residues 285–294 (SSTSTNTSFS), 303–318 (KTQSSFESESSSFSKL), and 335–350 (SNSSTSTITKTNTMTN). The span at 374–385 (KLFKSPRTRAKN) shows a compositional bias: basic residues. Over residues 392 to 410 (EGSSPIRSATNSLDFSGEN) the composition is skewed to polar residues.

This chain is Protein DSF2 (DSF2), found in Saccharomyces cerevisiae (strain ATCC 204508 / S288c) (Baker's yeast).